Reading from the N-terminus, the 202-residue chain is uncharacterized protein (202 aa).

One can recognise an HTH tetR-type domain in the interval Glu-13–Leu-73. A DNA-binding region (H-T-H motif) is located at residues Gly-36–Phe-55.

This is an uncharacterized protein from Mycobacterium tuberculosis (strain CDC 1551 / Oshkosh).